A 281-amino-acid chain; its full sequence is Diphthine methyl ester synthase (281 aa).

S-adenosyl-L-methionine contacts are provided by residues L9, D84, G87, 112–113 (SI), and L163. Position 171 is a phosphoserine (S171). 2 residues coordinate S-adenosyl-L-methionine: V225 and H250.

This sequence belongs to the diphthine synthase family.

It catalyses the reaction 2-[(3S)-amino-3-carboxypropyl]-L-histidyl-[translation elongation factor 2] + 4 S-adenosyl-L-methionine = diphthine methyl ester-[translation elongation factor 2] + 4 S-adenosyl-L-homocysteine + 3 H(+). The protein operates within protein modification; peptidyl-diphthamide biosynthesis. S-adenosyl-L-methionine-dependent methyltransferase that catalyzes four methylations of the modified target histidine residue in translation elongation factor 2 (EF-2), to form an intermediate called diphthine methyl ester. The four successive methylation reactions represent the second step of diphthamide biosynthesis. The polypeptide is Diphthine methyl ester synthase (Dph5) (Mus musculus (Mouse)).